The sequence spans 210 residues: Somatotropin-2 (210 aa).

The first 22 residues, 1-22 (MGQVFLLMPVLLVSCFLGQGAA), serve as a signal peptide directing secretion. His-38 serves as a coordination point for Zn(2+). A disulfide bridge connects residues Cys-71 and Cys-183. Position 192 (Glu-192) interacts with Zn(2+). Cys-200 and Cys-208 are joined by a disulfide.

This sequence belongs to the somatotropin/prolactin family.

It is found in the secreted. Functionally, growth hormone plays an important role in growth control and is involved in the regulation of several anabolic processes. Implicated as an osmoregulatory substance important for seawater adaptation. In Oncorhynchus mykiss (Rainbow trout), this protein is Somatotropin-2 (gh2).